Reading from the N-terminus, the 938-residue chain is Protein translocase subunit SecA (938 aa).

Residues Q90, 108-112 (GEGKT), and D504 contribute to the ATP site.

The protein belongs to the SecA family. Monomer and homodimer. Part of the essential Sec protein translocation apparatus which comprises SecA, SecYEG and auxiliary proteins SecDF. Other proteins may also be involved.

Its subcellular location is the cell inner membrane. It is found in the cellular thylakoid membrane. It localises to the cytoplasm. It carries out the reaction ATP + H2O + cellular proteinSide 1 = ADP + phosphate + cellular proteinSide 2.. Functionally, part of the Sec protein translocase complex. Interacts with the SecYEG preprotein conducting channel. Has a central role in coupling the hydrolysis of ATP to the transfer of proteins into and across the cell membrane, serving as an ATP-driven molecular motor driving the stepwise translocation of polypeptide chains across the membrane. Probably participates in protein translocation into and across both the cytoplasmic and thylakoid membranes in cyanobacterial cells. The chain is Protein translocase subunit SecA from Picosynechococcus sp. (strain ATCC 27264 / PCC 7002 / PR-6) (Agmenellum quadruplicatum).